Here is a 360-residue protein sequence, read N- to C-terminus: D-alanine--D-alanine ligase (360 aa).

The ATP-grasp domain occupies 149 to 353 (KKLMAAEGLP…YEELLDVLVQ (205 aa)). 176–231 (KNLLGLPVFVKPARGGSSIGISRVTAWEDFNKAVGLARAHDEKVIVESEIVGSEVE) is an ATP binding site. Mg(2+) is bound by residues Asp308, Glu320, and Asn322.

It belongs to the D-alanine--D-alanine ligase family. Mg(2+) is required as a cofactor. The cofactor is Mn(2+).

It is found in the cytoplasm. The enzyme catalyses 2 D-alanine + ATP = D-alanyl-D-alanine + ADP + phosphate + H(+). It participates in cell wall biogenesis; peptidoglycan biosynthesis. Cell wall formation. This Corynebacterium glutamicum (strain R) protein is D-alanine--D-alanine ligase.